We begin with the raw amino-acid sequence, 344 residues long: Methionine synthase (344 aa).

The Zn(2+) site is built by His211, Cys213, Glu236, and Cys315.

It belongs to the archaeal MetE family. Requires Zn(2+) as cofactor.

Its pathway is amino-acid biosynthesis; L-methionine biosynthesis via de novo pathway. Its function is as follows. Catalyzes the transfer of a methyl group to L-homocysteine resulting in methionine formation. The physiological methyl donor is unknown. In Thermoplasma volcanium (strain ATCC 51530 / DSM 4299 / JCM 9571 / NBRC 15438 / GSS1), this protein is Methionine synthase.